The sequence spans 257 residues: Transcription factor MYB3 (257 aa).

2 HTH myb-type domains span residues 9–61 (KAHM…MNYL) and 62–116 (RPDL…KRKL). 2 consecutive DNA-binding regions (H-T-H motif) follow at residues 37–61 (WRSLPRAAGLQRCGKSCRLRWMNYL) and 89–112 (WSLIAGRLPGRTDNEIKNYWNTHI). The Required for interaction with CPL1 motif lies at 189 to 193 (LNLEL).

As to quaternary structure, interacts with CPL1. As to expression, expressed in roots, stems, leaves, flowers and siliques.

The protein resides in the nucleus. This Arabidopsis thaliana (Mouse-ear cress) protein is Transcription factor MYB3 (MYB3).